The sequence spans 116 residues: Putative pterin-4-alpha-carbinolamine dehydratase (116 aa).

This sequence belongs to the pterin-4-alpha-carbinolamine dehydratase family.

It carries out the reaction (4aS,6R)-4a-hydroxy-L-erythro-5,6,7,8-tetrahydrobiopterin = (6R)-L-erythro-6,7-dihydrobiopterin + H2O. In Xylella fastidiosa (strain M23), this protein is Putative pterin-4-alpha-carbinolamine dehydratase.